The primary structure comprises 426 residues: Glutamyl-tRNA reductase (426 aa).

Substrate contacts are provided by residues 49-52 (TCNR), serine 107, 112-114 (EPQ), and glutamine 118. Cysteine 50 acts as the Nucleophile in catalysis. Residue 187–192 (GAGETI) participates in NADP(+) binding.

It belongs to the glutamyl-tRNA reductase family. In terms of assembly, homodimer.

The catalysed reaction is (S)-4-amino-5-oxopentanoate + tRNA(Glu) + NADP(+) = L-glutamyl-tRNA(Glu) + NADPH + H(+). It functions in the pathway porphyrin-containing compound metabolism; protoporphyrin-IX biosynthesis; 5-aminolevulinate from L-glutamyl-tRNA(Glu): step 1/2. Functionally, catalyzes the NADPH-dependent reduction of glutamyl-tRNA(Glu) to glutamate 1-semialdehyde (GSA). The polypeptide is Glutamyl-tRNA reductase (Ectopseudomonas mendocina (strain ymp) (Pseudomonas mendocina)).